The following is a 576-amino-acid chain: Arginine--tRNA ligase (576 aa).

The short motif at 122–132 is the 'HIGH' region element; that stretch reads PNVAKEMHVGH.

The protein belongs to the class-I aminoacyl-tRNA synthetase family. Monomer.

The protein resides in the cytoplasm. It carries out the reaction tRNA(Arg) + L-arginine + ATP = L-arginyl-tRNA(Arg) + AMP + diphosphate. This Photobacterium profundum (strain SS9) protein is Arginine--tRNA ligase.